Here is a 123-residue protein sequence, read N- to C-terminus: Small ribosomal subunit protein uS12 (123 aa).

Residues 1–32 (MPTIQQLVRKGRKDKKAKVKTAALKGSPQRRG) form a disordered region. Positions 9–19 (RKGRKDKKAKV) are enriched in basic residues. A 3-methylthioaspartic acid modification is found at aspartate 89.

The protein belongs to the universal ribosomal protein uS12 family. As to quaternary structure, part of the 30S ribosomal subunit. Contacts proteins S8 and S17. May interact with IF1 in the 30S initiation complex.

With S4 and S5 plays an important role in translational accuracy. Its function is as follows. Interacts with and stabilizes bases of the 16S rRNA that are involved in tRNA selection in the A site and with the mRNA backbone. Located at the interface of the 30S and 50S subunits, it traverses the body of the 30S subunit contacting proteins on the other side and probably holding the rRNA structure together. The combined cluster of proteins S8, S12 and S17 appears to hold together the shoulder and platform of the 30S subunit. This Corynebacterium kroppenstedtii (strain DSM 44385 / JCM 11950 / CIP 105744 / CCUG 35717) protein is Small ribosomal subunit protein uS12.